The chain runs to 188 residues: NANOG neighbor homeobox (188 aa).

Positions 28-106 are disordered; sequence ETILANKKQS…NEKQKQYPEK (79 aa). A compositionally biased stretch (basic and acidic residues) spans 57–106; that stretch reads QNGKQKWREEGEAGRKREREKEEKNEKELQDEQENKRKRENEKQKQYPEK. A DNA-binding region (homeobox) is located at residues 102–161; the sequence is QYPEKRLVSKSLMHTLWAKFKLNRCPTIQESLSLSFEFDMTHKQISQWFCKTRKKYNKEM.

It localises to the nucleus. The chain is NANOG neighbor homeobox (NANOGNB) from Homo sapiens (Human).